The chain runs to 481 residues: ATP synthase subunit beta (481 aa).

160–167 (GGAGVGKT) is an ATP binding site.

Belongs to the ATPase alpha/beta chains family. As to quaternary structure, F-type ATPases have 2 components, CF(1) - the catalytic core - and CF(0) - the membrane proton channel. CF(1) has five subunits: alpha(3), beta(3), gamma(1), delta(1), epsilon(1). CF(0) has three main subunits: a(1), b(2) and c(9-12). The alpha and beta chains form an alternating ring which encloses part of the gamma chain. CF(1) is attached to CF(0) by a central stalk formed by the gamma and epsilon chains, while a peripheral stalk is formed by the delta and b chains.

The protein resides in the cell inner membrane. The catalysed reaction is ATP + H2O + 4 H(+)(in) = ADP + phosphate + 5 H(+)(out). Its function is as follows. Produces ATP from ADP in the presence of a proton gradient across the membrane. The catalytic sites are hosted primarily by the beta subunits. The protein is ATP synthase subunit beta of Anaeromyxobacter sp. (strain Fw109-5).